A 1243-amino-acid polypeptide reads, in one-letter code: Membrane-associated phosphatidylinositol transfer protein 1 (1243 aa).

Residues threonine 59, threonine 282, and threonine 287 each carry the phosphothreonine modification. The tract at residues 259–330 (CNTGSEGPEA…HGGGVSPQSL (72 aa)) is disordered. Residues 271-283 (PGKSSTEARPGTS) show a composition bias toward polar residues. Over residues 299-319 (ASPDASFGKQWSSSSRSSYSS) the composition is skewed to low complexity. Phosphoserine occurs at positions 300, 304, 319, 326, 329, 342, 345, 346, and 373. Residue serine 382 is modified to Phosphoserine; by CDK1. Positions 581-593 (AGPGSRGSSRRGS) are enriched in low complexity. The segment at 581–679 (AGPGSRGSSR…PASSEAPDGP (99 aa)) is disordered. Phosphoserine occurs at positions 593, 600, and 621. Positions 643–658 (GSQNSLQVASTATSSG) are enriched in polar residues. The DDHD domain occupies 684 to 878 (RLDFKVSGFF…VVAFILRQVI (195 aa)). At serine 895 the chain carries Phosphoserine. Positions 1206–1243 (LLRSRGPSQVDREGPGTPPTTLARGKTRSISLKLDSEE) are disordered. Residues arginine 1210 and arginine 1217 each carry the omega-N-methylarginine modification. Serine 1236 is subject to Phosphoserine.

Belongs to the PtdIns transfer protein family. PI transfer class IIA subfamily. Interacts with PTK2B via its C-terminus. Interacts with RHOA. Has higher affinity for the inactive, GDP-bound form of RHOA. The CDK1-phosphorylated form interacts with PLK1. Interacts with VAPB and PIK4CA. Post-translationally, phosphorylated on multiple sites by CDK1 at the onset of mitosis. Phosphorylation facilitates dissociation from the Golgi complex and is required for interaction with PLK1. In terms of processing, phosphorylated on threonine residues upon treatment with oleic acid. Phosphorylated on tyrosine residues by PTK2B. Detected at high levels in brain, and at lower levels in lung, kidney, spleen and liver (at protein level). Ubiquitous. Highly expressed in embryonic retina and the central nervous system.

It localises to the cytoplasm. Its subcellular location is the golgi apparatus. The protein localises to the golgi stack membrane. The protein resides in the endoplasmic reticulum membrane. It is found in the lipid droplet. It localises to the cleavage furrow. Its subcellular location is the midbody. It catalyses the reaction a 1,2-diacyl-sn-glycero-3-phospho-(1D-myo-inositol)(in) = a 1,2-diacyl-sn-glycero-3-phospho-(1D-myo-inositol)(out). Catalyzes the transfer of phosphatidylinositol (PI) between membranes. Binds PI. Also binds phosphatidylcholine (PC) and phosphatidic acid (PA) with the binding affinity order of PI &gt; PA &gt; PC. Regulates RHOA activity, and plays a role in cytoskeleton remodeling. Necessary for normal completion of cytokinesis. Plays a role in maintaining normal diacylglycerol levels in the Golgi apparatus. Necessary for maintaining the normal structure of the endoplasmic reticulum and the Golgi apparatus. Required for protein export from the endoplasmic reticulum and the Golgi. Binds calcium ions. This chain is Membrane-associated phosphatidylinositol transfer protein 1 (Pitpnm1), found in Mus musculus (Mouse).